The sequence spans 121 residues: Anther-specific protein SF2 (121 aa).

Residues 1-21 form the signal peptide; the sequence is MANNSVSYLVLLLLVFVLAIS. A glycan (N-linked (GlcNAc...) asparagine) is linked at N115.

As to expression, epidermal anther cells.

The protein localises to the secreted. The protein resides in the cell wall. In terms of biological role, anther-specific cell wall protein which could contribute to the cell wall architecture of epidermal anther cells via intermolecular disulfide bridges. The sequence is that of Anther-specific protein SF2 from Helianthus annuus (Common sunflower).